The primary structure comprises 433 residues: Cyclin-dependent kinase 15 (433 aa).

Residues 46–83 (ASSSTASFHPRGLEAASAQKLKSKRPRSNSDSFQEENL) form a disordered region. Positions 52-336 (SFHPRGLEAA…SKLPNYNPEW (285 aa)) constitute a Protein kinase domain. ATP is bound by residues 58–66 (LEAASAQKL) and glutamate 81. Threonine 173 (proton acceptor) is an active-site residue.

This sequence belongs to the protein kinase superfamily. CMGC Ser/Thr protein kinase family. CDC2/CDKX subfamily. Mg(2+) is required as a cofactor.

The enzyme catalyses L-seryl-[protein] + ATP = O-phospho-L-seryl-[protein] + ADP + H(+). It carries out the reaction L-threonyl-[protein] + ATP = O-phospho-L-threonyl-[protein] + ADP + H(+). Functionally, serine/threonine-protein kinase that acts like an antiapoptotic protein that counters TRAIL/TNFSF10-induced apoptosis by inducing phosphorylation of BIRC5 at 'Thr-34'. This Mus musculus (Mouse) protein is Cyclin-dependent kinase 15 (Cdk15).